The sequence spans 655 residues: Epithelial sodium channel subunit gamma (655 aa).

The Cytoplasmic segment spans residues 1-55 (MAPGEKIKAKIKKNLPVRGPQAPTIKDLMHWYCLNTNTHGCRRIVVSRGRLRRLL). The helical transmembrane segment at 56-76 (WIAFTLTAVALIIWQCALLVF) threads the bilayer. Topologically, residues 77–547 (SFYTVSVSIK…GGQLGLWMSC (471 aa)) are extracellular. 8 disulfides stabilise this stretch: Cys-100/Cys-289, Cys-213/Cys-220, Cys-266/Cys-273, Cys-378/Cys-463, Cys-400/Cys-459, Cys-404/Cys-455, Cys-413/Cys-440, and Cys-415/Cys-429. The interval 140–227 (RKRREAGSMR…SDCATYTFSS (88 aa)) is gating release of inhibition by proteolysis (GRIP); protease-sensitive region that is responsible for the proteolytic activation of the channel. Asn-215 carries an N-linked (GlcNAc...) asparagine glycan. A glycan (N-linked (GlcNAc...) asparagine) is linked at Asn-277. Asn-503 carries N-linked (GlcNAc...) asparagine glycosylation. The chain crosses the membrane as a helical span at residues 548–568 (SVVCVIEIIEVFFIDFFSIIA). Residues 569-655 (RRQWQKAKDW…LTDTQLTNEF (87 aa)) are Cytoplasmic-facing. The tract at residues 582–636 (RRTPPSTETPSSQQGQDNPALDTDDDLPTFTSAMRLPPAPEAPVPGTPPPRYNTL) is disordered. Over residues 585–598 (PPSTETPSSQQGQD) the composition is skewed to polar residues. The segment covering 618-632 (PPAPEAPVPGTPPPR) has biased composition (pro residues). Residues 629–633 (PPPRY) carry the PY motif; recruits WW domain-containing proteins and is thereby required for ubiquitination and inhibition of the channel by NEDD4 and NEDD4L motif.

Belongs to the amiloride-sensitive sodium channel (TC 1.A.6) family. SCNN1G subfamily. Component of the heterotrimeric epithelial sodium channel (ENaC) composed of an alpha/SCNN1A, a beta/SCNN1B and a gamma/SCNN1G subunit. Interacts with WWP1 (via WW domains). Interacts with WWP2 (via WW domains); inhibits the channel. Interacts with the full-length immature form of PCSK9 (pro-PCSK9); inhibits ENaC by promoting its proteasomal degradation. Interacts with BPIFA1; the interaction is indirect via SCNN1B and inhibits the proteolytic maturation of SCNN1A and SCNN1G and the activation of ENaC. Phosphorylated on serine and threonine residues. Aldosterone and insulin increase the basal level of phosphorylation. In terms of processing, ubiquitinated. Can be ubiquitinated at multiple sites and undergo monoubiquitination and polyubiquitination. Ubiquitination by NEDD4 or NEDD4L inhibits the ENaC channel through endocytosis, intracellular retention and degradation of its individual subunits. Post-translationally, ENaC is activated through the proteolytic maturation of its subunits. Furin cleaves the SCNN1G subunit first, followed by cleavage by prostasin (PRSS8), which results in a stepwise increase in the open probability of the channel due to the release of an inhibitory tract. BPIFA1, which is recruited by the SCNN1B subunit, prevents the proteolytic activation of ENaC. N-glycosylated. N-linked glycans are processed to complex type during ENaC complex assembly and transport to the plasma membrane. In terms of tissue distribution, lung and kidney.

It localises to the apical cell membrane. The catalysed reaction is Na(+)(in) = Na(+)(out). With respect to regulation, originally identified and characterized by its inhibition by the diuretic drug amiloride. Its function is as follows. This is one of the three pore-forming subunits of the heterotrimeric epithelial sodium channel (ENaC), a critical regulator of sodium balance and fluid homeostasis. ENaC operates in epithelial tissues, where it mediates the electrodiffusion of sodium ions from extracellular fluid through the apical membrane of cells, with water following osmotically. It plays a key role in maintaining sodium homeostasis through electrogenic sodium reabsorption in the kidneys. Additionally, ENaC is essential for airway surface liquid homeostasis, which is crucial for proper mucus clearance. The protein is Epithelial sodium channel subunit gamma of Mus musculus (Mouse).